A 74-amino-acid chain; its full sequence is UPF0435 protein BAA_0470 (74 aa).

This sequence belongs to the UPF0435 family.

This is UPF0435 protein BAA_0470 from Bacillus anthracis (strain A0248).